We begin with the raw amino-acid sequence, 206 residues long: N-(5'-phosphoribosyl)anthranilate isomerase (206 aa).

Belongs to the TrpF family.

It catalyses the reaction N-(5-phospho-beta-D-ribosyl)anthranilate = 1-(2-carboxyphenylamino)-1-deoxy-D-ribulose 5-phosphate. Its pathway is amino-acid biosynthesis; L-tryptophan biosynthesis; L-tryptophan from chorismate: step 3/5. This chain is N-(5'-phosphoribosyl)anthranilate isomerase, found in Chlamydia caviae (strain ATCC VR-813 / DSM 19441 / 03DC25 / GPIC) (Chlamydophila caviae).